We begin with the raw amino-acid sequence, 108 residues long: UPF0145 protein alr2488 (108 aa).

This sequence belongs to the UPF0145 family.

This is UPF0145 protein alr2488 from Nostoc sp. (strain PCC 7120 / SAG 25.82 / UTEX 2576).